We begin with the raw amino-acid sequence, 131 residues long: Antileukoproteinase (131 aa).

Residues 1–25 (MKSCGLLPFTVLLALGILAPWTVEG) form the signal peptide. WAP domains lie at 29 to 77 (DAIK…VNPV) and 83 to 131 (VWRK…LPPM). Intrachain disulfides connect cysteine 36-cysteine 65, cysteine 44-cysteine 69, cysteine 52-cysteine 64, cysteine 58-cysteine 73, cysteine 90-cysteine 119, cysteine 97-cysteine 123, cysteine 106-cysteine 118, and cysteine 112-cysteine 127. The segment at 85–131 (RKPGRCVKTQARCMMLNPPNVCQRDGQCDGKYKCCEGICGKVCLPPM) is elastase inhibitory domain.

In terms of assembly, interacts with GRN; interaction protects progranulin from proteolysis. As to expression, detected in bronchial epithelial cells. Detected in bronchoalveolar fluid after infection with M.tuberculosis (at protein level). Highest expression in lung, spleen, intestine and epididymis with lower levels in liver and seminal vesicle. No expression in brain, heart, kidney and muscle.

Its subcellular location is the secreted. In terms of biological role, acid-stable proteinase inhibitor with strong affinities for trypsin, chymotrypsin, elastase, and cathepsin G. Modulates the innate immune response after bacterial infection. Contributes to regulate the inflammatory and immune responses to the intracellular parasite L.major. Down-regulates responses to bacterial lipopolysaccharide (LPS). Plays a role in regulating the activation of NF-kappa-B and inflammatory responses. Has antimicrobial activity against mycobacteria, but not against salmonella. Contributes to normal resistance against infection by M.tuberculosis. Required for normal resistance to L.major. Required for normal wound healing, probably by preventing tissue damage by limiting protease activity. Together with ELANE, required for normal differentiation and proliferation of bone marrow myeloid cells. This Mus musculus (Mouse) protein is Antileukoproteinase (Slpi).